The following is a 701-amino-acid chain: Ribosomal RNA large subunit methyltransferase K/L (701 aa).

The region spanning 43–155 (LLYKSLMWSR…NNILHIMLDL (113 aa)) is the THUMP domain.

It belongs to the methyltransferase superfamily. RlmKL family.

It localises to the cytoplasm. The enzyme catalyses guanosine(2445) in 23S rRNA + S-adenosyl-L-methionine = N(2)-methylguanosine(2445) in 23S rRNA + S-adenosyl-L-homocysteine + H(+). It carries out the reaction guanosine(2069) in 23S rRNA + S-adenosyl-L-methionine = N(2)-methylguanosine(2069) in 23S rRNA + S-adenosyl-L-homocysteine + H(+). In terms of biological role, specifically methylates the guanine in position 2445 (m2G2445) and the guanine in position 2069 (m7G2069) of 23S rRNA. The sequence is that of Ribosomal RNA large subunit methyltransferase K/L from Buchnera aphidicola subsp. Acyrthosiphon pisum (strain APS) (Acyrthosiphon pisum symbiotic bacterium).